The primary structure comprises 117 residues: Large ribosomal subunit protein bL19 (117 aa).

It belongs to the bacterial ribosomal protein bL19 family.

This protein is located at the 30S-50S ribosomal subunit interface and may play a role in the structure and function of the aminoacyl-tRNA binding site. The polypeptide is Large ribosomal subunit protein bL19 (Vibrio vulnificus (strain CMCP6)).